The following is a 951-amino-acid chain: Leucine-rich repeat-containing G-protein coupled receptor 4 (951 aa).

The first 24 residues, 1-24 (MPGPLRLLCFFALGLLGSAGPSGA), serve as a signal peptide directing secretion. The LRRNT domain maps to 25–57 (APPLCAAPCSCDGDRRVDCSGKGLTAVPEGLSA). Residues 25–544 (APPLCAAPCS…LLGSWMIRLT (520 aa)) lie on the Extracellular side of the membrane. Cystine bridges form between C29–C35 and C33–C43. LRR repeat units follow at residues 58–79 (FTQALDISMNNITQLPEDAFKS), 82–103 (FLEELQLAGNDLSFIHPKALSG), 106–127 (ELKVLTLQNNQLRTVPSEAIHG), 130–151 (ALQSLRLDANHITSVPEDSFEG), 154–177 (QLRHLWLDDNSLTEVPVRPLSNLP), 178–199 (TLQALTLALNNISSIPDFAFTN), 202–223 (SLVVLHLHNNKIKSLSQHCFDG), 226–247 (NLETLDLNYNNLDEFPQAIKAL), 249–270 (SLKELGFHSNSISVIPDGAFGG), and 273–294 (LLRTIHLYDNPLSFVGNSAFHN). An N-linked (GlcNAc...) asparagine glycan is attached at N68. N188 and N199 each carry an N-linked (GlcNAc...) asparagine glycan. N-linked (GlcNAc...) asparagine glycosylation is found at N294 and N314. LRR repeat units follow at residues 320–341 (HLESLTLTGTKISSIPDDLCQN), 344–365 (MLRTLDLSYNNIRDLPSFNGCR), 366–387 (ALEEISLQRNQISLIKENTFQG), 390–411 (SLRILDLSRNLIREIHSGAFAK), and 414–435 (TITNLDVSFNELTSFPTEGLNG). An intrachain disulfide couples C339 to C364. Cystine bridges form between C470/C522 and C471/C476. N505 is a glycosylation site (N-linked (GlcNAc...) asparagine). Residues 545–565 (VWFIFLVALLFNLLVILTVFA) traverse the membrane as a helical segment. Residues 566 to 575 (SCSSLPASKL) lie on the Cytoplasmic side of the membrane. Residues 576-596 (FIGLISVSNLLMGIYTGILTF) form a helical membrane-spanning segment. Over 597–619 (LDAVSWGRFAEFGIWWETGSGCK) the chain is Extracellular. An intrachain disulfide couples C618 to C693. The helical transmembrane segment at 620–640 (VAGSLAVFSSESAVFLLTLAA) threads the bilayer. Over 641–661 (VERSVFAKDLMKHGKSSHLRQ) the chain is Cytoplasmic. The chain crosses the membrane as a helical span at residues 662–682 (FQVAALLALLGAAVAGCFPLF). The Extracellular segment spans residues 683-703 (HGGQYSASPLCLPFPTGETPS). A helical membrane pass occupies residues 704–724 (LGFTVTLVLLNSLAFLLMAII). At 725 to 756 (YTKLYCNLEKEDLSENSQSSVIKHVAWLIFTN) the chain is on the cytoplasmic side. A helical membrane pass occupies residues 757-777 (CIFFCPVAFFSFAPLITAISI). The Extracellular portion of the chain corresponds to 778–783 (SPEIMK). A helical membrane pass occupies residues 784-804 (SVTLIFFPLPACLNPVLYVFF). At 805 to 951 (NPKFKEDWKL…YAYNLQRVRD (147 aa)) the chain is on the cytoplasmic side. S920 bears the Phosphoserine mark.

Belongs to the G-protein coupled receptor 1 family.

It is found in the cell membrane. Its function is as follows. Receptor for R-spondins that potentiates the canonical Wnt signaling pathway and is involved in the formation of various organs. Upon binding to R-spondins (RSPO1, RSPO2, RSPO3 or RSPO4), associates with phosphorylated LRP6 and frizzled receptors that are activated by extracellular Wnt receptors, triggering the canonical Wnt signaling pathway to increase expression of target genes. In contrast to classical G-protein coupled receptors, does not activate heterotrimeric G-proteins to transduce the signal. Its function as activator of the Wnt signaling pathway is required for the development of various organs, including liver, kidney, intestine, bone, reproductive tract and eye. May also act as a receptor for norrin (NDP), such results however require additional confirmation in vivo. Required during spermatogenesis to activate the Wnt signaling pathway in peritubular myoid cells. Required for the maintenance of intestinal stem cells and Paneth cell differentiation in postnatal intestinal crypts. Acts as a regulator of bone formation and remodeling. Involved in kidney development; required for maintaining the ureteric bud in an undifferentiated state. Involved in the development of the anterior segment of the eye. Required during erythropoiesis. Also acts as a negative regulator of innate immunity by inhibiting TLR2/TLR4 associated pattern-recognition and pro-inflammatory cytokine production. Plays an important role in regulating the circadian rhythms of plasma lipids, partially through regulating the rhythmic expression of MTTP. Required for proper development of GnRH neurons (gonadotropin-releasing hormone expressing neurons) that control the release of reproductive hormones from the pituitary gland. This chain is Leucine-rich repeat-containing G-protein coupled receptor 4 (Lgr4), found in Rattus norvegicus (Rat).